Consider the following 549-residue polypeptide: Exodeoxyribonuclease 7 large subunit (549 aa).

The segment at 511 to 549 is disordered; sequence LVATDPPVDPKPTRKPVQKSSSPKPSSRKPKKSQQEDLF.

This sequence belongs to the XseA family. As to quaternary structure, heterooligomer composed of large and small subunits.

Its subcellular location is the cytoplasm. It catalyses the reaction Exonucleolytic cleavage in either 5'- to 3'- or 3'- to 5'-direction to yield nucleoside 5'-phosphates.. Its function is as follows. Bidirectionally degrades single-stranded DNA into large acid-insoluble oligonucleotides, which are then degraded further into small acid-soluble oligonucleotides. The polypeptide is Exodeoxyribonuclease 7 large subunit (Beijerinckia indica subsp. indica (strain ATCC 9039 / DSM 1715 / NCIMB 8712)).